A 519-amino-acid polypeptide reads, in one-letter code: Putative glucosylceramidase 4 (519 aa).

The signal sequence occupies residues 1–24; sequence MILNISVSLLIFLAFYGFSSDAKS. Glu-256 (proton donor) is an active-site residue. Catalysis depends on Glu-361, which acts as the Nucleophile.

It belongs to the glycosyl hydrolase 30 family.

It carries out the reaction a beta-D-glucosylceramide + H2O = an N-acyl-sphingoid base + D-glucose. The catalysed reaction is a beta-D-glucosyl-(1&lt;-&gt;1')-N-acylsphing-4-enine + H2O = an N-acylsphing-4-enine + D-glucose. The enzyme catalyses an N-acyl-1-beta-D-glucosyl-15-methylhexadecasphing-4-enine + H2O = an N-acyl-15-methylhexadecasphing-4-enine + D-glucose. The protein operates within lipid metabolism; sphingolipid metabolism. Its function is as follows. Glucosylceramidase that catalyzes the hydrolysis of glucosylceramides into free ceramides and glucose. C.elegans contains specific sphingoid bases, which are unique or different in structure compared to the sphingoid bases found in other animals. Two examples of these distinctive compounds are: 15-methylhexadecasphinganine and 15-methylhexadecasphing-4-enine. The chain is Putative glucosylceramidase 4 (gba-4) from Caenorhabditis elegans.